Reading from the N-terminus, the 51-residue chain is ATP synthase F(1) complex subunit epsilon, mitochondrial (51 aa).

Residues Lys-21, Lys-32, and Lys-37 each carry the N6-acetyllysine; alternate modification. An N6-succinyllysine; alternate mark is found at Lys-21, Lys-32, and Lys-37. Lys-44 bears the N6-acetyllysine mark.

The protein belongs to the eukaryotic ATPase epsilon family. In terms of assembly, component of the ATP synthase complex composed at least of ATP5F1A/subunit alpha, ATP5F1B/subunit beta, ATP5MC1/subunit c (homooctomer), MT-ATP6/subunit a, MT-ATP8/subunit 8, ATP5ME/subunit e, ATP5MF/subunit f, ATP5MG/subunit g, ATP5MK/subunit k, ATP5MJ/subunit j, ATP5F1C/subunit gamma, ATP5F1D/subunit delta, ATP5F1E/subunit epsilon, ATP5PF/subunit F6, ATP5PB/subunit b, ATP5PD/subunit d, ATP5PO/subunit OSCP. ATP synthase complex consists of a soluble F(1) head domain (subunits alpha(3) and beta(3)) - the catalytic core - and a membrane F(0) domain - the membrane proton channel (subunits c, a, 8, e, f, g, k and j). These two domains are linked by a central stalk (subunits gamma, delta, and epsilon) rotating inside the F1 region and a stationary peripheral stalk (subunits F6, b, d, and OSCP).

It localises to the mitochondrion. The protein localises to the mitochondrion inner membrane. Its function is as follows. Subunit epsilon, of the mitochondrial membrane ATP synthase complex (F(1)F(0) ATP synthase or Complex V) that produces ATP from ADP in the presence of a proton gradient across the membrane which is generated by electron transport complexes of the respiratory chain. ATP synthase complex consist of a soluble F(1) head domain - the catalytic core - and a membrane F(1) domain - the membrane proton channel. These two domains are linked by a central stalk rotating inside the F(1) region and a stationary peripheral stalk. During catalysis, ATP synthesis in the catalytic domain of F(1) is coupled via a rotary mechanism of the central stalk subunits to proton translocation. In vivo, can only synthesize ATP although its ATP hydrolase activity can be activated artificially in vitro. May be essential for the assembly of F(1) and may play an important role in the incorporation of the hydrophobic subunit c into the F(1)-c oligomer rotor of the mitochondrial ATP synthase complex. The polypeptide is ATP synthase F(1) complex subunit epsilon, mitochondrial (Bos taurus (Bovine)).